The primary structure comprises 252 residues: uncharacterized protein (252 aa).

28–35 (GCDGTGKS) serves as a coordination point for ATP.

The protein to E.coli YghS and YghT.

This is an uncharacterized protein from Escherichia coli O6:H1 (strain CFT073 / ATCC 700928 / UPEC).